Here is a 371-residue protein sequence, read N- to C-terminus: Maltose/maltodextrin import ATP-binding protein MalK (371 aa).

Residues 4–234 enclose the ABC transporter domain; that stretch reads VQLQNVTKAW…PADRFVAGFI (231 aa). ATP is bound at residue 36-43; it reads GPSGCGKS.

It belongs to the ABC transporter superfamily. Maltooligosaccharide importer (TC 3.A.1.1.1) family. The complex is composed of two ATP-binding proteins (MalK), two transmembrane proteins (MalG and MalK) and a solute-binding protein (MalE).

The protein localises to the cell inner membrane. The enzyme catalyses D-maltose(out) + ATP + H2O = D-maltose(in) + ADP + phosphate + H(+). Its function is as follows. Part of the ABC transporter complex MalEFGK involved in maltose/maltodextrin import. Responsible for energy coupling to the transport system. This chain is Maltose/maltodextrin import ATP-binding protein MalK, found in Shigella flexneri serotype 5b (strain 8401).